A 220-amino-acid chain; its full sequence is MTDDVRDVNTETTDATEVAEIDSAAGEAGDSATEAFDTDSATESTAQKGQRHRDLWRMQVTLKPVPVILILLMLISGGATGWLYLEQYRPDQQTDSGAARAAVAAASDGTIALLSYSPDTLDQDFATARSHLAGDFLSYYDQFTQQIVAPAAKQKSLKTTAKVVRAAVSELHPDSAVVLVFVDQSTTSKDSPNPSMAASSVMVTLAKVDGNWLITKFTPV.

The disordered stretch occupies residues 1-50 (MTDDVRDVNTETTDATEVAEIDSAAGEAGDSATEAFDTDSATESTAQKGQ). A compositionally biased stretch (polar residues) spans 39–48 (DSATESTAQK). The chain crosses the membrane as a helical span at residues 65–85 (VPVILILLMLISGGATGWLYL).

To M.tuberculosis Rv1363c.

It localises to the membrane. This is an uncharacterized protein from Mycobacterium tuberculosis (strain CDC 1551 / Oshkosh).